A 231-amino-acid polypeptide reads, in one-letter code: Ribosomal RNA large subunit methyltransferase E (231 aa).

S-adenosyl-L-methionine contacts are provided by Gly76, Trp78, Asp99, Asp115, and Asp139. Lys179 acts as the Proton acceptor in catalysis.

The protein belongs to the class I-like SAM-binding methyltransferase superfamily. RNA methyltransferase RlmE family.

The protein resides in the cytoplasm. It carries out the reaction uridine(2552) in 23S rRNA + S-adenosyl-L-methionine = 2'-O-methyluridine(2552) in 23S rRNA + S-adenosyl-L-homocysteine + H(+). Specifically methylates the uridine in position 2552 of 23S rRNA at the 2'-O position of the ribose in the fully assembled 50S ribosomal subunit. The sequence is that of Ribosomal RNA large subunit methyltransferase E from Bradyrhizobium sp. (strain ORS 278).